A 79-amino-acid polypeptide reads, in one-letter code: Cell division protein ZapB (79 aa).

Positions 3 to 79 form a coiled coil; sequence LEVFEKLEAK…QALLGRMEEV (77 aa).

Belongs to the ZapB family. As to quaternary structure, homodimer. The ends of the coiled-coil dimer bind to each other, forming polymers. Interacts with FtsZ.

It localises to the cytoplasm. Functionally, non-essential, abundant cell division factor that is required for proper Z-ring formation. It is recruited early to the divisome by direct interaction with FtsZ, stimulating Z-ring assembly and thereby promoting cell division earlier in the cell cycle. Its recruitment to the Z-ring requires functional FtsA or ZipA. The polypeptide is Cell division protein ZapB (Salmonella typhi).